The primary structure comprises 112 residues: Cell cycle protein GpsB (112 aa).

Positions 32-75 form a coiled coil; sequence LDDIIKDYETYISTIEELRQENTRLKEEVKQAKKRQEAAQTTVS.

The protein belongs to the GpsB family. Forms polymers through the coiled coil domains. Interacts with PBP1, MreC and EzrA.

It localises to the cytoplasm. Functionally, divisome component that associates with the complex late in its assembly, after the Z-ring is formed, and is dependent on DivIC and PBP2B for its recruitment to the divisome. Together with EzrA, is a key component of the system that regulates PBP1 localization during cell cycle progression. Its main role could be the removal of PBP1 from the cell pole after pole maturation is completed. Also contributes to the recruitment of PBP1 to the division complex. Not essential for septum formation. The protein is Cell cycle protein GpsB of Streptococcus mutans serotype c (strain ATCC 700610 / UA159).